The chain runs to 172 residues: Small integral membrane protein 23 (172 aa).

Residues 1–36 (MATQQVDSRRQVAAEQVAAQLLERRRGSHCDDEKQT) are Cytoplasmic-facing. Residues 37–53 (LLALLILVLYLSTEIWG) traverse the membrane as a helical; Signal-anchor for type II membrane protein segment. The Extracellular portion of the chain corresponds to 54-172 (SSWEVSERIR…LEISLSGAEL (119 aa)). The stretch at 96–128 (LKEKLHVFSEKLEEEVQQLEQLAWDLELWLDAL) forms a coiled coil.

The protein resides in the cell membrane. In Homo sapiens (Human), this protein is Small integral membrane protein 23 (SMIM23).